Reading from the N-terminus, the 79-residue chain is MKEEEIIDAVYQAVVDHIYSVVPAKRIADLDISIGIEGRDLTIDITLVTDRTQEIDQKTIEEAIKVATEKADELMAKND.

The protein belongs to the UPF0440 family.

This is an uncharacterized protein from Methanocella arvoryzae (strain DSM 22066 / NBRC 105507 / MRE50).